A 201-amino-acid chain; its full sequence is Small ribosomal subunit protein uS4 (201 aa).

Residues 91-157 form the S4 RNA-binding domain; the sequence is SRLDNVVYRA…LPFQVARETV (67 aa).

It belongs to the universal ribosomal protein uS4 family. In terms of assembly, part of the 30S ribosomal subunit. Contacts protein S5. The interaction surface between S4 and S5 is involved in control of translational fidelity.

In terms of biological role, one of the primary rRNA binding proteins, it binds directly to 16S rRNA where it nucleates assembly of the body of the 30S subunit. Its function is as follows. With S5 and S12 plays an important role in translational accuracy. The chain is Small ribosomal subunit protein uS4 from Rhodococcus erythropolis (strain PR4 / NBRC 100887).